Reading from the N-terminus, the 275-residue chain is MVQQLSSLRGSSAEALQVLGEQVDGDRYTLEEFAALADDLFRAAALLRSEPALRRAVTDVSTPAEAKSSLVHGLLDGKLGAPAVDLLAQAVGLRWVAARDLADAVEHLGVVAAVRSAGRRESVRLSDELFVVAQVVEENAELRIALSDPVRSTDDKRELLRGLLAQRALPATVALVEQALAGSFRSFHAAVSEYQKVAAATQGEGVALVRVARELTEAERTRLEQALSTQYGRPVHLNIEVDPSLLGGMRVEIGDDVIDGTVVSRLDDARRRLAG.

It belongs to the ATPase delta chain family. As to quaternary structure, F-type ATPases have 2 components, F(1) - the catalytic core - and F(0) - the membrane proton channel. F(1) has five subunits: alpha(3), beta(3), gamma(1), delta(1), epsilon(1). F(0) has three main subunits: a(1), b(2) and c(10-14). The alpha and beta chains form an alternating ring which encloses part of the gamma chain. F(1) is attached to F(0) by a central stalk formed by the gamma and epsilon chains, while a peripheral stalk is formed by the delta and b chains.

The protein resides in the cell membrane. In terms of biological role, f(1)F(0) ATP synthase produces ATP from ADP in the presence of a proton or sodium gradient. F-type ATPases consist of two structural domains, F(1) containing the extramembraneous catalytic core and F(0) containing the membrane proton channel, linked together by a central stalk and a peripheral stalk. During catalysis, ATP synthesis in the catalytic domain of F(1) is coupled via a rotary mechanism of the central stalk subunits to proton translocation. This protein is part of the stalk that links CF(0) to CF(1). It either transmits conformational changes from CF(0) to CF(1) or is implicated in proton conduction. The polypeptide is ATP synthase subunit delta (Nocardioides sp. (strain ATCC BAA-499 / JS614)).